A 413-amino-acid polypeptide reads, in one-letter code: Enhanced ethylene response protein 5 (413 aa).

The PCI domain occupies 216–402 (VTYMYYTGRL…KVVVLSKQDP (187 aa)).

Interacts with EIN2 (via C-terminus). May also interact weakly with CSN8. Interacts with DSS1(V), AMPD, SAC3A, SAC3B and At5g61290 (AC Q9FLK4). Interacts with UCH1 and UCH2. Interacts with NUP1, anchoring the TREX-2 complex on the nuclear pore complex. Expressed at low levels in roots, leaves, stems and shoots. Detected in seedlings, roots, leaves and anthers.

Its subcellular location is the nucleus. Functionally, involved in the regulation of ethylene response. Probable TREX-2 component required for nuclear RNA export. The TREX-2 complex (transcription and export complex 2) functions in docking export-competent ribonucleoprotein particles (mRNPs) to the nuclear entrance of the nuclear pore complex (nuclear basket). TREX-2 participates in mRNA export and accurate chromatin positioning in the nucleus by tethering genes to the nuclear periphery. The chain is Enhanced ethylene response protein 5 from Arabidopsis thaliana (Mouse-ear cress).